Consider the following 353-residue polypeptide: Chorismate synthase (353 aa).

An NADP(+)-binding site is contributed by arginine 48. FMN is bound by residues 128–130 (RAS), glycine 280, 295–299 (KPIPS), and arginine 321.

It belongs to the chorismate synthase family. In terms of assembly, homotetramer. FMNH2 is required as a cofactor.

The catalysed reaction is 5-O-(1-carboxyvinyl)-3-phosphoshikimate = chorismate + phosphate. It functions in the pathway metabolic intermediate biosynthesis; chorismate biosynthesis; chorismate from D-erythrose 4-phosphate and phosphoenolpyruvate: step 7/7. Its function is as follows. Catalyzes the anti-1,4-elimination of the C-3 phosphate and the C-6 proR hydrogen from 5-enolpyruvylshikimate-3-phosphate (EPSP) to yield chorismate, which is the branch point compound that serves as the starting substrate for the three terminal pathways of aromatic amino acid biosynthesis. This reaction introduces a second double bond into the aromatic ring system. The chain is Chorismate synthase from Nitratidesulfovibrio vulgaris (strain DSM 19637 / Miyazaki F) (Desulfovibrio vulgaris).